The chain runs to 64 residues: Alternative prion protein (64 aa).

A disordered region spans residues 1-22; it reads MEHWGEPIPGTGQSWRQPLSTS. Residues 11 to 22 are compositionally biased toward polar residues; the sequence is TGQSWRQPLSTS. Residues 40-58 traverse the membrane as a helical segment; the sequence is WRWLGSAPWWWLGTATWWW.

The protein resides in the mitochondrion outer membrane. This is Alternative prion protein from Ovis aries (Sheep).